The chain runs to 450 residues: Bifunctional protein GlmU (450 aa).

The tract at residues 1–226 is pyrophosphorylase; it reads MLAVAVLAAG…ADEVNGINNR (226 aa). Residues 7–10, Lys-21, Gln-73, and 78–79 contribute to the UDP-N-acetyl-alpha-D-glucosamine site; these read LAAG and GT. Asp-103 provides a ligand contact to Mg(2+). Gly-140, Glu-155, Asn-170, and Asn-224 together coordinate UDP-N-acetyl-alpha-D-glucosamine. Asn-224 serves as a coordination point for Mg(2+). Residues 227–247 form a linker region; sequence RQLAQCEALLQQRLRHHWMDE. The N-acetyltransferase stretch occupies residues 248-450; sequence GVTFIDPESC…TKEGWAERKV (203 aa). UDP-N-acetyl-alpha-D-glucosamine contacts are provided by Arg-329 and Lys-347. His-359 serves as the catalytic Proton acceptor. UDP-N-acetyl-alpha-D-glucosamine is bound by residues Tyr-362 and Asn-373. Acetyl-CoA contacts are provided by residues Ala-376, 382–383, Ala-419, and Arg-436; that span reads NY.

The protein in the N-terminal section; belongs to the N-acetylglucosamine-1-phosphate uridyltransferase family. It in the C-terminal section; belongs to the transferase hexapeptide repeat family. In terms of assembly, homotrimer. Requires Mg(2+) as cofactor.

It is found in the cytoplasm. It catalyses the reaction alpha-D-glucosamine 1-phosphate + acetyl-CoA = N-acetyl-alpha-D-glucosamine 1-phosphate + CoA + H(+). The catalysed reaction is N-acetyl-alpha-D-glucosamine 1-phosphate + UTP + H(+) = UDP-N-acetyl-alpha-D-glucosamine + diphosphate. The protein operates within nucleotide-sugar biosynthesis; UDP-N-acetyl-alpha-D-glucosamine biosynthesis; N-acetyl-alpha-D-glucosamine 1-phosphate from alpha-D-glucosamine 6-phosphate (route II): step 2/2. It participates in nucleotide-sugar biosynthesis; UDP-N-acetyl-alpha-D-glucosamine biosynthesis; UDP-N-acetyl-alpha-D-glucosamine from N-acetyl-alpha-D-glucosamine 1-phosphate: step 1/1. Its pathway is bacterial outer membrane biogenesis; LPS lipid A biosynthesis. In terms of biological role, catalyzes the last two sequential reactions in the de novo biosynthetic pathway for UDP-N-acetylglucosamine (UDP-GlcNAc). The C-terminal domain catalyzes the transfer of acetyl group from acetyl coenzyme A to glucosamine-1-phosphate (GlcN-1-P) to produce N-acetylglucosamine-1-phosphate (GlcNAc-1-P), which is converted into UDP-GlcNAc by the transfer of uridine 5-monophosphate (from uridine 5-triphosphate), a reaction catalyzed by the N-terminal domain. In Synechococcus sp. (strain CC9605), this protein is Bifunctional protein GlmU.